Reading from the N-terminus, the 614-residue chain is Glucosidase 2 subunit beta (614 aa).

The N-terminal stretch at 1–19 is a signal peptide; that stretch reads MGLHAILLLLLLRISASAA. Asn115 is a glycosylation site (N-linked (GlcNAc...) asparagine). Composition is skewed to basic and acidic residues over residues 194 to 222, 231 to 272, and 324 to 351; these read EEER…KKAS, QENH…HDPE, and TGEK…HSEE. Positions 194–396 are disordered; that stretch reads EEERLRKEKE…SHESDDEYVD (203 aa). The segment covering 352–364 has biased composition (acidic residues); sequence THEDESDVPESAE. Over residues 372-382 the composition is skewed to basic and acidic residues; the sequence is SEVEDDRHKYD. The span at 383-396 shows a compositional bias: acidic residues; that stretch reads DEDFSHESDDEYVD. Residues 497 to 592 form the MRH domain; the sequence is DQCFESKEGK…VLSTPALCDE (96 aa). 3 cysteine pairs are disulfide-bonded: Cys499–Cys512, Cys549–Cys578, and Cys563–Cys590.

Heterodimer of a catalytic alpha subunit and a beta subunit.

It localises to the endoplasmic reticulum. It functions in the pathway glycan metabolism; N-glycan metabolism. Regulatory subunit of glucosidase II. May be required for defense response elicited by pathogen-associated molecular patterns (PAMPs). The chain is Glucosidase 2 subunit beta from Oryza sativa subsp. japonica (Rice).